A 401-amino-acid polypeptide reads, in one-letter code: Nicotinate phosphoribosyltransferase (401 aa).

The residue at position 224 (histidine 224) is a Phosphohistidine; by autocatalysis.

Belongs to the NAPRTase family. Transiently phosphorylated on a His residue during the reaction cycle. Phosphorylation strongly increases the affinity for substrates and increases the rate of nicotinate D-ribonucleotide production. Dephosphorylation regenerates the low-affinity form of the enzyme, leading to product release.

The enzyme catalyses nicotinate + 5-phospho-alpha-D-ribose 1-diphosphate + ATP + H2O = nicotinate beta-D-ribonucleotide + ADP + phosphate + diphosphate. The protein operates within cofactor biosynthesis; NAD(+) biosynthesis; nicotinate D-ribonucleotide from nicotinate: step 1/1. Its function is as follows. Catalyzes the synthesis of beta-nicotinate D-ribonucleotide from nicotinate and 5-phospho-D-ribose 1-phosphate at the expense of ATP. The protein is Nicotinate phosphoribosyltransferase of Pseudomonas putida (strain GB-1).